The chain runs to 807 residues: Ribosome biogenesis protein ERB1 (807 aa).

Residues 1–112 form a disordered region; it reads MMAKNNKTTE…DTTSLTDRLS (112 aa). 2 stretches are compositionally biased toward acidic residues: residues 21 to 30 and 42 to 56; these read EESDVEEDED and EASE…YESA. S23 is modified (phosphoserine). Basic and acidic residues predominate over residues 57–69; sequence VEEKESSSDKEAQ. 2 positions are modified to phosphoserine: S72 and S76. Positions 86–102 are enriched in acidic residues; the sequence is EEEGDEEEDYDSSEFSD. K127 participates in a covalent cross-link: Glycyl lysine isopeptide (Lys-Gly) (interchain with G-Cter in ubiquitin). Phosphoserine occurs at positions 146 and 149. The interval 265-383 is required for interaction with NOP7; the sequence is RFVPSKNEAK…LRKVPGYGES (119 aa). Positions 383-419 are required for interaction with YTM1; the sequence is SIRERFERSLDLYLAPRVRKNKLNIDPNSLIPELPSP. Phosphoserine is present on S418. WD repeat units lie at residues 435–474, 483–523, 592–634, 637–675, 678–717, 721–760, and 776–807; these read GHKG…EVYR, NPDD…YDIE, SCKK…TQSP, KSKG…LVKK, PGAR…TPYK, YHEK…DMMK, and INSL…LWTT.

This sequence belongs to the WD repeat BOP1/ERB1 family. Component of the NOP7 complex, composed of ERB1, NOP7 and YTM1. The complex is held together by ERB1, which interacts with NOP7 via its N-terminal domain and with YTM1 via a high-affinity interaction between the seven-bladed beta-propeller domains of the 2 proteins. The NOP7 complex associates with the 66S pre-ribosome.

It is found in the nucleus. It localises to the nucleolus. The protein resides in the nucleoplasm. In terms of biological role, component of the NOP7 complex, which is required for maturation of the 25S and 5.8S ribosomal RNAs and formation of the 60S ribosome. This is Ribosome biogenesis protein ERB1 from Saccharomyces cerevisiae (strain YJM789) (Baker's yeast).